The primary structure comprises 489 residues: tRNA(Ile)-lysidine synthase (489 aa).

35–40 (SGGLDS) provides a ligand contact to ATP.

This sequence belongs to the tRNA(Ile)-lysidine synthase family.

It localises to the cytoplasm. It catalyses the reaction cytidine(34) in tRNA(Ile2) + L-lysine + ATP = lysidine(34) in tRNA(Ile2) + AMP + diphosphate + H(+). In terms of biological role, ligates lysine onto the cytidine present at position 34 of the AUA codon-specific tRNA(Ile) that contains the anticodon CAU, in an ATP-dependent manner. Cytidine is converted to lysidine, thus changing the amino acid specificity of the tRNA from methionine to isoleucine. In Burkholderia mallei (strain ATCC 23344), this protein is tRNA(Ile)-lysidine synthase.